We begin with the raw amino-acid sequence, 389 residues long: Terminal nucleotidyltransferase 5D (389 aa).

It belongs to the TENT family. As to expression, restricted to testis.

It carries out the reaction RNA(n) + ATP = RNA(n)-3'-adenine ribonucleotide + diphosphate. In terms of biological role, catalyzes the transfer of one adenosine molecule from an ATP to an mRNA poly(A) tail bearing a 3'-OH terminal group. The protein is Terminal nucleotidyltransferase 5D of Homo sapiens (Human).